The chain runs to 478 residues: Glutamyl-tRNA(Gln) amidotransferase subunit A 2 (478 aa).

Residues Lys79 and Ser154 each act as charge relay system in the active site. Residue Ser178 is the Acyl-ester intermediate of the active site.

It belongs to the amidase family. GatA subfamily. In terms of assembly, heterotrimer of A, B and C subunits.

It carries out the reaction L-glutamyl-tRNA(Gln) + L-glutamine + ATP + H2O = L-glutaminyl-tRNA(Gln) + L-glutamate + ADP + phosphate + H(+). Its function is as follows. Allows the formation of correctly charged Gln-tRNA(Gln) through the transamidation of misacylated Glu-tRNA(Gln) in organisms which lack glutaminyl-tRNA synthetase. The reaction takes place in the presence of glutamine and ATP through an activated gamma-phospho-Glu-tRNA(Gln). The protein is Glutamyl-tRNA(Gln) amidotransferase subunit A 2 (gatA2) of Clostridium acetobutylicum (strain ATCC 824 / DSM 792 / JCM 1419 / IAM 19013 / LMG 5710 / NBRC 13948 / NRRL B-527 / VKM B-1787 / 2291 / W).